A 396-amino-acid polypeptide reads, in one-letter code: Putative F-box protein At4g22660 (396 aa).

An F-box domain is found at 7-58 (PNTWSDLPLDLLNLVFKRLSFANFRQAKSVCSSWYSASKQSVPKNQIPWLML).

In Arabidopsis thaliana (Mouse-ear cress), this protein is Putative F-box protein At4g22660.